Here is a 448-residue protein sequence, read N- to C-terminus: Probable glycine dehydrogenase (decarboxylating) subunit 1 (448 aa).

The protein belongs to the GcvP family. N-terminal subunit subfamily. As to quaternary structure, the glycine cleavage system is composed of four proteins: P, T, L and H. In this organism, the P 'protein' is a heterodimer of two subunits.

The enzyme catalyses N(6)-[(R)-lipoyl]-L-lysyl-[glycine-cleavage complex H protein] + glycine + H(+) = N(6)-[(R)-S(8)-aminomethyldihydrolipoyl]-L-lysyl-[glycine-cleavage complex H protein] + CO2. The glycine cleavage system catalyzes the degradation of glycine. The P protein binds the alpha-amino group of glycine through its pyridoxal phosphate cofactor; CO(2) is released and the remaining methylamine moiety is then transferred to the lipoamide cofactor of the H protein. This Listeria innocua serovar 6a (strain ATCC BAA-680 / CLIP 11262) protein is Probable glycine dehydrogenase (decarboxylating) subunit 1.